The following is a 503-amino-acid chain: Probable cytosol aminopeptidase (503 aa).

Lys-270 and Asp-275 together coordinate Mn(2+). Lys-282 is an active-site residue. Mn(2+) is bound by residues Asp-293, Asp-352, and Glu-354. Residue Arg-356 is part of the active site.

This sequence belongs to the peptidase M17 family. Mn(2+) serves as cofactor.

It localises to the cytoplasm. The catalysed reaction is Release of an N-terminal amino acid, Xaa-|-Yaa-, in which Xaa is preferably Leu, but may be other amino acids including Pro although not Arg or Lys, and Yaa may be Pro. Amino acid amides and methyl esters are also readily hydrolyzed, but rates on arylamides are exceedingly low.. It carries out the reaction Release of an N-terminal amino acid, preferentially leucine, but not glutamic or aspartic acids.. In terms of biological role, presumably involved in the processing and regular turnover of intracellular proteins. Catalyzes the removal of unsubstituted N-terminal amino acids from various peptides. The protein is Probable cytosol aminopeptidase of Shigella dysenteriae serotype 1 (strain Sd197).